The primary structure comprises 92 residues: Secreted RxLR effector protein 21 (92 aa).

Residues 1-21 (MNLSTLLLTLACISQLHGGSA) form the signal peptide. Residues 30–33 (RQLR) carry the RxLR motif.

The protein belongs to the RxLR effector family.

Its subcellular location is the secreted. It is found in the host nucleus. The protein resides in the host cytoplasm. Secreted effector that completely suppresses the host cell death induced by cell death-inducing proteins. The polypeptide is Secreted RxLR effector protein 21 (Plasmopara viticola (Downy mildew of grapevine)).